The primary structure comprises 1862 residues: Ankyrin-1 (1862 aa).

The segment at 1–827 (MGFCKADAAT…DELVGSKAER (827 aa)) is 89 kDa domain. 23 ANK repeats span residues 40–69 (NGLNGLHLASKEGHVKMVVELLHKEIILET), 73–102 (KGNTALHIAALAGQDEVVRELVNYGANVNA), 106–135 (KGFTPLYMAAQENHLEVVKFLLENGANQNV), 139–168 (DGFTPLAVALQQGHENVVAHLINYGTKGKV), 170–197 (LPALHIAARNDDTRTAAVLLQNDPNPDV), 201–230 (TGFTPLHIAAHYENLNVAQLLLNRGASVNF), 234–263 (NGITPLHIASRRGNVIMVRLLLDRGAQIET), 267–296 (DELTPLHCAARNGHVRISEILLDHGAPIQA), 300–329 (NGLSPIHMAAQGDHLDCVRLLLQYNAEIDD), 333–362 (DHLTPLHVAAHCGHHRVAKVLLDKGAKPNS), 366–395 (NGFTPLHIACKKNHIRVMELLLKTGASIDA), 399–428 (SGLTPLHVASFMGHLPIVKNLLQRGASPNV), 432–461 (KVETPLHMAARAGHTEVAKYLLQNKAKANA), 465–494 (DDQTPLHCAARIGHTGMVKLLLENGASPNL), 498–527 (AGHTPLHTAAREGHVDTALALLEKEASQAC), 531–560 (KGFTPLHVAAKYGKVRLAELLLEHDAHPNA), 564–593 (NGLTPLHVAVHHNNLDIVKLLLPRGGSPHS), 597–626 (NGYTPLHIAAKQNQIEVARSLLQYGGSANA), 630–659 (QGVTPLHLAAQEGHTEMVALLLSKQANGNL), 663–692 (SGLTPLHLVSQEGHVPVADVLIKHGVTVDA), 696–725 (MGYTPLHVASHYGNIKLVKFLLQHQADVNA), 729–758 (LGYSPLHQAAQQGHTDIVTLLLKNGASPNE), and 762–791 (NGTTPLAIAKRLGYISVTDVLKVVTDETSV). Lysine 55 bears the Phosphoserine mark. At asparagine 101 the chain carries (3S)-3-hydroxyasparagine; by HIF1AN; partial. Asparagine 229 is subject to (3S)-3-hydroxyasparagine; by HIF1AN. Serine 425 is modified (phosphoserine). (3S)-3-hydroxyasparagine; by HIF1AN is present on residues asparagine 427 and asparagine 460. (3S)-3-hydroxyasparagine; by HIF1AN is present on residues asparagine 625 and asparagine 658. The residue at position 691 (aspartate 691) is a (3S)-3-hydroxyaspartate; by HIF1AN. Asparagine 724 is modified ((3S)-3-hydroxyasparagine; by HIF1AN). Serine 755 is modified (phosphoserine). Asparagine 757 carries the post-translational modification (3S)-3-hydroxyasparagine; by HIF1AN. Residues serine 777, serine 813, serine 830, and serine 852 each carry the phosphoserine modification. The tract at residues 812–834 (VSEDEGDELVGSKAERRDSRDVG) is disordered. The segment covering 824–834 (KAERRDSRDVG) has biased composition (basic and acidic residues). Residue threonine 862 is modified to Phosphothreonine. The segment at 872-900 (DQEQASKEYDEDSLIPSSPATETSDNISP) is disordered. A compositionally biased stretch (polar residues) spans 886–900 (IPSSPATETSDNISP). ZU5 domains are found at residues 909 to 1064 (FLVS…IMSR) and 1066 to 1212 (CQDY…LSDC). Threonine 957 is subject to Phosphothreonine. Phosphotyrosine is present on tyrosine 1069. The residue at position 1078 (serine 1078) is a Phosphoserine. The interval 1197-1331 (ANFTTNVSAR…PVKVRDSSRE (135 aa)) is UPA domain. Phosphothreonine is present on residues threonine 1374 and threonine 1376. 2 positions are modified to phosphoserine: serine 1386 and serine 1388. The 55 kDa regulatory domain stretch occupies residues 1387-1862 (ESRLGFTSDT…KRASLKRGKQ (476 aa)). The residue at position 1396 (threonine 1396) is a Phosphothreonine. The 85-residue stretch at 1399 to 1483 (VEMRMAVIRE…EIVNMLEGSG (85 aa)) folds into the Death domain. Residues serine 1424, serine 1473, and serine 1482 each carry the phosphoserine modification. The disordered stretch occupies residues 1481-1506 (GSGRQSRNLKPERRHGDREYSLSPSQ). The segment covering 1489-1500 (LKPERRHGDREY) has biased composition (basic and acidic residues). Residues serine 1519, serine 1529, and serine 1612 each carry the phosphoserine modification. 2 disordered regions span residues 1598-1720 (EGAH…GPHS) and 1744-1767 (VSTREHVQRGPPETGSPKAGKEPS). Residues 1637 to 1647 (EGQRSEKKRQE) are compositionally biased toward basic and acidic residues. Polar residues predominate over residues 1648 to 1666 (VSGTEQDTETEVSLVSGQQ). A phosphoserine mark is found at serine 1660, serine 1675, and serine 1685. A compositionally biased stretch (basic and acidic residues) spans 1681-1694 (VLDRSQARTLDWDK). Positions 1695–1720 (QGSTAVHPQEATQSSWQEEVTQGPHS) are enriched in polar residues.

As to quaternary structure, component of the ankyrin-1 complex in the erythrocyte, composed of ANK1, RHCE, RHAG, SLC4A1, EPB42, GYPA, GYPB and AQP1. Interacts with a number of integral membrane proteins and cytoskeletal proteins. Interacts (via N-terminus) with SPTB/spectrin (beta chain). Also interacts with TTN/titin. Isoform Mu17 interacts with OBSCN isoform 3/obscurin. Interacts with HIF1AN. Interacts (via ANK 1-5 repeats) with RHCE; this interaction mediates the primary membrane attachment site for ANK1. Interacts (via ANK 1-2 repeats) with AQP1 (via the N-terminal). Interacts (via ANK 1-13 repeats) with EPB42. Interacts directly with SLC4A1 (via the cytoplasmic domain); this interaction is mediated by the SLC4A1 Band 3-II and Band 3-III dimers. Regulated by phosphorylation. Post-translationally, acylated by palmitic acid group(s). In terms of processing, hydroxylated by HIF1AN at several asparagine and 1 aspartate residue within ANK repeat region; hydroxylation seems to increase the conformational stability of this region and may also modulate protein-protein interactions mediated by the ANK repeat region.

The protein localises to the cytoplasm. It is found in the cytoskeleton. The protein resides in the membrane. Its subcellular location is the sarcoplasmic reticulum. Functionally, component of the ankyrin-1 complex, a multiprotein complex involved in the stability and shape of the erythrocyte membrane. Attaches integral membrane proteins to cytoskeletal elements; binds to the erythrocyte membrane protein band 4.2, to Na-K ATPase, to the lymphocyte membrane protein GP85, and to the cytoskeletal proteins fodrin, tubulin, vimentin and desmin. Erythrocyte ankyrins also link spectrin (beta chain) to the cytoplasmic domain of the erythrocytes anion exchange protein; they retain most or all of these binding functions. The sequence is that of Ankyrin-1 from Mus musculus (Mouse).